The sequence spans 231 residues: Ribonuclease 3 (231 aa).

Positions 5–134 (QKGIKEDFGI…FIGALYKDQG (130 aa)) constitute an RNase III domain. Residue glutamate 47 participates in Mg(2+) binding. Aspartate 51 is an active-site residue. Positions 120 and 123 each coordinate Mg(2+). The active site involves glutamate 123. The DRBM domain maps to 160 to 230 (DYKSKLQELL…AKKAYQDVTP (71 aa)).

Belongs to the ribonuclease III family. Homodimer. Requires Mg(2+) as cofactor.

Its subcellular location is the cytoplasm. The catalysed reaction is Endonucleolytic cleavage to 5'-phosphomonoester.. In terms of biological role, digests double-stranded RNA. Involved in the processing of primary rRNA transcript to yield the immediate precursors to the large and small rRNAs (23S and 16S). Processes some mRNAs, and tRNAs when they are encoded in the rRNA operon. Processes pre-crRNA and tracrRNA of type II CRISPR loci if present in the organism. In Oenococcus oeni (strain ATCC BAA-331 / PSU-1), this protein is Ribonuclease 3.